We begin with the raw amino-acid sequence, 109 residues long: UPF0122 protein CLH_1195 (109 aa).

The protein belongs to the UPF0122 family.

In terms of biological role, might take part in the signal recognition particle (SRP) pathway. This is inferred from the conservation of its genetic proximity to ftsY/ffh. May be a regulatory protein. The sequence is that of UPF0122 protein CLH_1195 from Clostridium botulinum (strain Alaska E43 / Type E3).